Consider the following 233-residue polypeptide: MSQSNRELVVDFLSYKLSQKGYSWSQFSDVEENRTEAPEETEAERETPSAINGNPSWHLADSPAVNGATGHSSSLDAREVIPMAAVKQALREAGDEFELRYRRAFSDLTSQLHITPGTAYQSFEQVVNELFRDGVNWGRIVAFFSFGGALCVESVDKEMQVLVSRIASWMATYLNDHLEPWIQENGGWDTFVDLYGNNAAAESRKGQERFNRWFLTGMTVAGVVLLGSLFSRK.

The BH4 signature appears at Ser4 to Trp24. Residues Phe27–Ser73 are disordered. Position 49 is a phosphoserine; by PLK3 (Ser49). The residue at position 62 (Ser62) is a Phosphoserine; by CDK1. A BH3 motif is present at residues Val86–Arg100. A BH1 motif is present at residues Glu129 to Gly148. Positions Pro180–Tyr195 match the BH2 motif. A helical membrane pass occupies residues Phe210 to Leu226.

It belongs to the Bcl-2 family. Homodimer. Interacts with BAD. Interacts with PGAM5. Interacts with HEBP2. Interacts with p53/TP53 and BBC3; interaction with BBC3 disrupts the interaction with p53/TP53. Interacts with ATP5F1A and ATP5F1B; the interactions mediate the association of isoform Bcl-X(L) with the mitochondrial membrane ATP synthase F(1)F(0) ATP synthase. Interacts with VDAC1. Interacts with BCL2L11 (via BH3). Interacts with RNF183. Interacts with GIMAP3/IAN4 and GIMAP5/IAN5. Interacts with GIMAP5 and HSPA8/HSC70; the interaction between HSPA8 and BCL2L1 is impaired in the absence of GIMAP5. Interacts with isoform 4 of CLU; this interaction releases and activates BAX and promotes cell death. As to quaternary structure, forms heterodimers with BAX, BAK or BCL2; heterodimerization with BAX does not seem to be required for anti-apoptotic activity. Interacts with isoform 1 of SIVA1; the interaction inhibits the anti-apoptotic activity. Interacts with IKZF3. Interacts with RTL10/BOP. Interacts with DNM1L and CLTA; DNM1L and BCL2L1 isoform BCL-X(L) may form a complex in synaptic vesicles that also contains clathrin and MFF. Interacts (via the loop between motifs BH4 and BH3) with NLRP1 (via LRR repeats), but not with NLRP2, NLRP3, NLRP4, PYCARD, nor MEFV. Interacts with BECN1. Post-translationally, proteolytically cleaved by caspases during apoptosis. The cleaved protein, lacking the BH4 motif, has pro-apoptotic activity. In terms of processing, phosphorylated on Ser-62 by CDK1. This phosphorylation is partial in normal mitotic cells, but complete in G2-arrested cells upon DNA-damage, thus promoting subsequent apoptosis probably by triggering caspases-mediated proteolysis. Phosphorylated by PLK3, leading to regulate the G2 checkpoint and progression to cytokinesis during mitosis. Phosphorylation at Ser-49 appears during the S phase and G2, disappears rapidly in early mitosis during prometaphase, metaphase and early anaphase, and re-appears during telophase and cytokinesis. Ubiquitinated by RNF183 during prolonged ER stress, leading to degradation by the proteosome. Widely expressed, with highest levels in the brain, thymus, bone marrow, and kidney. Bcl-X(L) and Bcl-X(delta-TM) expression is enhanced in B- and T-lymphocytes that have been activated.

The protein localises to the mitochondrion membrane. It is found in the nucleus membrane. Its subcellular location is the cytoplasm. The protein resides in the cytoskeleton. It localises to the microtubule organizing center. The protein localises to the centrosome. It is found in the mitochondrion inner membrane. Its subcellular location is the mitochondrion outer membrane. The protein resides in the mitochondrion matrix. It localises to the cytoplasmic vesicle. The protein localises to the secretory vesicle. It is found in the synaptic vesicle membrane. Its subcellular location is the cytosol. Potent inhibitor of cell death. Inhibits activation of caspases. Appears to regulate cell death by blocking the voltage-dependent anion channel (VDAC) by binding to it and preventing the release of the caspase activator, CYC1, from the mitochondrial membrane. Also acts as a regulator of G2 checkpoint and progression to cytokinesis during mitosis. In terms of biological role, isoform Bcl-X(L) also regulates presynaptic plasticity, including neurotransmitter release and recovery, number of axonal mitochondria as well as size and number of synaptic vesicle clusters. During synaptic stimulation, increases ATP availability from mitochondria through regulation of mitochondrial membrane ATP synthase F(1)F(0) activity and regulates endocytic vesicle retrieval in hippocampal neurons through association with DMN1L and stimulation of its GTPase activity in synaptic vesicles. May attenuate inflammation impairing NLRP1-inflammasome activation, hence CASP1 activation and IL1B release. Functionally, isoform Bcl-X(S) promotes apoptosis. The chain is Bcl-2-like protein 1 (Bcl2l1) from Mus musculus (Mouse).